A 238-amino-acid polypeptide reads, in one-letter code: Tetrahydromethanopterin S-methyltransferase subunit A 1 (238 aa).

Residues 2–218 (VEKKSPAEGW…RMFAGMYSGK (217 aa)) lie on the Cytoplasmic side of the membrane. His-84 is a 5-hydroxybenzimidazolylcob(I)amide binding site. Residues 219-237 (VQGIMIGLAFTLTLGILLL) form a helical membrane-spanning segment. Val-238 is a topological domain (extracellular).

Belongs to the MtrA family. As to quaternary structure, the complex is composed of 8 subunits; MtrA, MtrB, MtrC, MtrD, MtrE, MtrF, MtrG and MtrH. Requires 5-hydroxybenzimidazolylcob(I)amide as cofactor.

The protein localises to the cell membrane. The catalysed reaction is 5-methyl-5,6,7,8-tetrahydromethanopterin + coenzyme M + 2 Na(+)(in) = 5,6,7,8-tetrahydromethanopterin + methyl-coenzyme M + 2 Na(+)(out). Its pathway is one-carbon metabolism; methanogenesis from CO(2); methyl-coenzyme M from 5,10-methylene-5,6,7,8-tetrahydromethanopterin: step 2/2. Its function is as follows. Part of a complex that catalyzes the formation of methyl-coenzyme M and tetrahydromethanopterin from coenzyme M and methyl-tetrahydromethanopterin. This is an energy-conserving, sodium-ion translocating step. This is Tetrahydromethanopterin S-methyltransferase subunit A 1 from Methanothermobacter thermautotrophicus (strain ATCC 29096 / DSM 1053 / JCM 10044 / NBRC 100330 / Delta H) (Methanobacterium thermoautotrophicum).